Here is a 417-residue protein sequence, read N- to C-terminus: Serine hydroxymethyltransferase 1 (417 aa).

(6S)-5,6,7,8-tetrahydrofolate-binding positions include L121 and 125–127 (GHL). Residue K230 is modified to N6-(pyridoxal phosphate)lysine. Residue 355–357 (SPF) coordinates (6S)-5,6,7,8-tetrahydrofolate.

Belongs to the SHMT family. Homodimer. Pyridoxal 5'-phosphate serves as cofactor.

It is found in the cytoplasm. The enzyme catalyses (6R)-5,10-methylene-5,6,7,8-tetrahydrofolate + glycine + H2O = (6S)-5,6,7,8-tetrahydrofolate + L-serine. Its pathway is one-carbon metabolism; tetrahydrofolate interconversion. It functions in the pathway amino-acid biosynthesis; glycine biosynthesis; glycine from L-serine: step 1/1. In terms of biological role, catalyzes the reversible interconversion of serine and glycine with tetrahydrofolate (THF) serving as the one-carbon carrier. This reaction serves as the major source of one-carbon groups required for the biosynthesis of purines, thymidylate, methionine, and other important biomolecules. Also exhibits THF-independent aldolase activity toward beta-hydroxyamino acids, producing glycine and aldehydes, via a retro-aldol mechanism. In Pseudomonas putida (strain ATCC 47054 / DSM 6125 / CFBP 8728 / NCIMB 11950 / KT2440), this protein is Serine hydroxymethyltransferase 1.